We begin with the raw amino-acid sequence, 280 residues long: Probable N-acetyltransferase 14 (280 aa).

The next 2 helical transmembrane spans lie at 37-57 and 60-80; these read LILH…LSSI and CVLH…VIYL. The tract at residues 111–152 is disordered; sequence PDLPNPHLGRAKLTTNQEKTRRRKKAKEKEKMNESEQVDEDE. Residues 116 to 273 form the N-acetyltransferase domain; that stretch reads PHLGRAKLTT…EKGWLGYPLT (158 aa).

This sequence belongs to the camello family.

Its subcellular location is the membrane. Its function is as follows. Probable acetyltransferase. This Danio rerio (Zebrafish) protein is Probable N-acetyltransferase 14 (nat14).